The chain runs to 381 residues: uncharacterized protein (381 aa).

A disordered region spans residues 176 to 292 (HAAGKIKKSK…EPMVDETPQN (117 aa)). The segment covering 177–186 (AAGKIKKSKN) has biased composition (basic residues). Residues 187-212 (QKKDGTLSRPLGKKENKSVVKVKIEE) show a composition bias toward basic and acidic residues. Residues 276 to 286 (DEEDEDEEPMV) show a composition bias toward acidic residues.

This is an uncharacterized protein from Caenorhabditis elegans.